A 303-amino-acid chain; its full sequence is Ribosomal RNA small subunit methyltransferase H (303 aa).

S-adenosyl-L-methionine is bound by residues 33-35 (GGH), Asp52, Phe79, Asp97, and Gln104.

It belongs to the methyltransferase superfamily. RsmH family.

Its subcellular location is the cytoplasm. The catalysed reaction is cytidine(1402) in 16S rRNA + S-adenosyl-L-methionine = N(4)-methylcytidine(1402) in 16S rRNA + S-adenosyl-L-homocysteine + H(+). Its function is as follows. Specifically methylates the N4 position of cytidine in position 1402 (C1402) of 16S rRNA. The chain is Ribosomal RNA small subunit methyltransferase H from Wolinella succinogenes (strain ATCC 29543 / DSM 1740 / CCUG 13145 / JCM 31913 / LMG 7466 / NCTC 11488 / FDC 602W) (Vibrio succinogenes).